The sequence spans 203 residues: Outer-membrane lipoprotein carrier protein (203 aa).

The signal sequence occupies residues 1 to 21; it reads MKKWLAISCLIAGVTSTAVYA.

It belongs to the LolA family. As to quaternary structure, monomer.

Its subcellular location is the periplasm. Its function is as follows. Participates in the translocation of lipoproteins from the inner membrane to the outer membrane. Only forms a complex with a lipoprotein if the residue after the N-terminal Cys is not an aspartate (The Asp acts as a targeting signal to indicate that the lipoprotein should stay in the inner membrane). The protein is Outer-membrane lipoprotein carrier protein of Pectobacterium atrosepticum (strain SCRI 1043 / ATCC BAA-672) (Erwinia carotovora subsp. atroseptica).